The chain runs to 655 residues: tRNA-guanine(15) transglycosylase (655 aa).

The active-site Nucleophile is D89. Residues D124 and A195 each coordinate substrate. 3 residues coordinate Zn(2+): C281, C283, and C286. Residues 577 to 652 (KYRVVVNKEA…LAVKVRGGLK (76 aa)) enclose the PUA domain.

It belongs to the archaeosine tRNA-ribosyltransferase family. The cofactor is Zn(2+).

The enzyme catalyses guanosine(15) in tRNA + 7-cyano-7-deazaguanine = 7-cyano-7-carbaguanosine(15) in tRNA + guanine. The protein operates within tRNA modification; archaeosine-tRNA biosynthesis. Its function is as follows. Exchanges the guanine residue with 7-cyano-7-deazaguanine (preQ0) at position 15 in the dihydrouridine loop (D-loop) of archaeal tRNAs. Can also utilize guanine as substrate. This is tRNA-guanine(15) transglycosylase from Methanocaldococcus jannaschii (strain ATCC 43067 / DSM 2661 / JAL-1 / JCM 10045 / NBRC 100440) (Methanococcus jannaschii).